Consider the following 139-residue polypeptide: MRVTLSDTALRHIALFEDVTGASAVDCLVDDDRVCFLVATGEMSDAIGPDGTTVEQVEERLDKRVSLVENADTAELFVANALAPAVVHNVTISENASTVAYAEVDRADTGVAIGRDGETIETARRLAERQFDIDDIELA.

The KH domain maps to 97 to 139; the sequence is STVAYAEVDRADTGVAIGRDGETIETARRLAERQFDIDDIELA.

It belongs to the NusA family.

It localises to the cytoplasm. Participates in transcription termination. The chain is Probable transcription termination protein NusA from Halococcus morrhuae (Micrococcus morrhuae).